The primary structure comprises 207 residues: uncharacterized protein (207 aa).

It localises to the mitochondrion. This is an uncharacterized protein from Marchantia polymorpha (Common liverwort).